The primary structure comprises 65 residues: Small ribosomal subunit protein eS17 (65 aa).

It belongs to the eukaryotic ribosomal protein eS17 family.

The protein is Small ribosomal subunit protein eS17 of Methanobrevibacter smithii (strain ATCC 35061 / DSM 861 / OCM 144 / PS).